The chain runs to 312 residues: DnaJ homolog subfamily B member 7 (312 aa).

A J domain is found at 3–69 (DYYEVLGVQR…EKRDIYDKYG (67 aa)). Residues 272 to 312 (SWVTNKKEPSIFSAGFKEGGRRKKKKHKEGQKKKKSNKRNH) form a disordered region. Over residues 291–312 (GRRKKKKHKEGQKKKKSNKRNH) the composition is skewed to basic residues.

Probably acts as a co-chaperone. This chain is DnaJ homolog subfamily B member 7 (Dnajb7), found in Mus musculus (Mouse).